Here is a 211-residue protein sequence, read N- to C-terminus: Superoxide dismutase [Mn] (211 aa).

Mn(2+) is bound by residues His-27, His-82, Asp-165, and His-169.

Belongs to the iron/manganese superoxide dismutase family. In terms of assembly, homodimer. Requires Mn(2+) as cofactor.

The enzyme catalyses 2 superoxide + 2 H(+) = H2O2 + O2. Its function is as follows. Destroys superoxide anion radicals which are normally produced within the cells and which are toxic to biological systems. The sequence is that of Superoxide dismutase [Mn] (sodA) from Bordetella pertussis (strain Tohama I / ATCC BAA-589 / NCTC 13251).